Consider the following 217-residue polypeptide: MAVSSTTLSSPTPPECLQQQEAPRPPATRGRLVVLTGPSGVGKGTLVSQLRQRHPELYFSVSVTTRPPRPGEQEGVNYYFRTREEFLNLIEADELLEWAQYAGNFYGTPREIVFQKLSQGQDVLLEIELAGARQVRQQCPDAIRIFLSPPSLEELERRIRERGQDSEASIQRRLQQARKELDAKDEFDYVIVNDNLEQALQELEALLYPPSPGKGQS.

Over residues 1–10 the composition is skewed to low complexity; the sequence is MAVSSTTLSS. Residues 1 to 30 form a disordered region; sequence MAVSSTTLSSPTPPECLQQQEAPRPPATRG. The 179-residue stretch at 30–208 folds into the Guanylate kinase-like domain; that stretch reads GRLVVLTGPS…ALQELEALLY (179 aa). 37-44 contributes to the ATP binding site; sequence GPSGVGKG.

The protein belongs to the guanylate kinase family.

It localises to the cytoplasm. The catalysed reaction is GMP + ATP = GDP + ADP. It carries out the reaction dZMP + ATP = dZDP + ADP. The protein operates within purine metabolism. Essential for recycling GMP and indirectly, cGMP. Functionally, (Microbial infection) Catalyzes the phosphorylation of dZMP to dZDP, when the bacterium is infected by a phage that produces the substrate for the synthesis of dZTP (2- amino-2'-deoxyadenosine 5'-triphosphate), which is then used by the phage as a DNA polymerase substrate. In Synechococcus sp. (strain JA-3-3Ab) (Cyanobacteria bacterium Yellowstone A-Prime), this protein is Guanylate kinase.